The following is a 278-amino-acid chain: Envelope glycoprotein L (278 aa).

The first 30 residues, 1-30 (MCRRPDCGFSFSPGPVILLWCCLLLPIVSS), serve as a signal peptide directing secretion. A gL betaherpesvirus-type domain is found at 43–256 (VPAECPELTR…DKYYAGLPPE (214 aa)). C154 and C159 form a disulfide bridge.

Belongs to the herpesviridae glycoprotein L (gL) family. Betaherpesvirinae gL subfamily. Interacts with glycoprotein H (gH); this interaction is necessary for the correct processing and cell surface expression of gH. Forms the envelope pentamer complex (PC) composed of gH, gL, UL128, UL130, and UL131A. The pentamer interacts with host NRP2. Forms the envelope trimer complex composed of gH, gL, and gO. The trimer interacts with host PDGFRA. The trimer also interacts with host EPHA2.

It localises to the virion membrane. Its subcellular location is the host cell membrane. The protein localises to the host Golgi apparatus. The protein resides in the host trans-Golgi network. Functionally, the heterodimer glycoprotein H-glycoprotein L is required for the fusion of viral and plasma membranes leading to virus entry into the host cell. Acts as a functional inhibitor of gH and maintains gH in an inhibited form. Upon binding to host integrins, gL dissociates from gH leading to activation of the viral fusion glycoproteins gB and gH. In human cytomegalovirus, forms two distincts complexes to mediate viral entry, a trimer and a pentamer at the surface of the virion envelope. The gH-gL-gO trimer is required for infection in fibroblasts by interacting with host PDGFRA, and in glioblastoma cells by interacting with host EPHA2. The gH-gL-UL128-UL130-UL131A pentamer is essential for viral entry in epithelial, endothelial and myeloid cells via interaction with host NRP2. The protein is Envelope glycoprotein L of Homo sapiens (Human).